A 358-amino-acid chain; its full sequence is Isopentenyl-diphosphate delta-isomerase (358 aa).

12–13 contacts substrate; it reads RK. FMN is bound by residues 69 to 71, Ser-99, and Asn-128; that span reads AMT. Residue Gln-158 participates in substrate binding. Mg(2+) is bound at residue Glu-159. FMN is bound by residues Lys-190, Thr-220, 267–269, and 288–289; these read GIR and AG.

It belongs to the IPP isomerase type 2 family. As to quaternary structure, homooctamer. Dimer of tetramers. Requires FMN as cofactor. It depends on NADPH as a cofactor. The cofactor is Mg(2+).

The protein resides in the cytoplasm. It carries out the reaction isopentenyl diphosphate = dimethylallyl diphosphate. Functionally, involved in the biosynthesis of isoprenoids. Catalyzes the 1,3-allylic rearrangement of the homoallylic substrate isopentenyl (IPP) to its allylic isomer, dimethylallyl diphosphate (DMAPP). The chain is Isopentenyl-diphosphate delta-isomerase from Listeria monocytogenes serovar 1/2a (strain ATCC BAA-679 / EGD-e).